Consider the following 215-residue polypeptide: UPF0502 protein YceH (215 aa).

Lys80 carries the post-translational modification N6-acetyllysine.

This sequence belongs to the UPF0502 family.

The polypeptide is UPF0502 protein YceH (Escherichia coli O81 (strain ED1a)).